Here is a 404-residue protein sequence, read N- to C-terminus: Lupus La protein homolog (404 aa).

The region spanning 7-99 (NEKMAALEAK…RRSPSKPLPE (93 aa)) is the HTH La-type RNA-binding domain. 2 positions are modified to phosphoserine: S92 and S94. Positions 111-187 (RSVYIKGFPT…TDLLILFKED (77 aa)) constitute an RRM domain. K116 carries the post-translational modification N6-acetyllysine. Residue T120 is modified to Phosphothreonine. K128 is modified (N6-acetyllysine). Position 225 is a phosphoserine (S225). Positions 227-348 (EEKIGCLLKF…KGKGNKAAQA (122 aa)) constitute a xRRM domain. N6-acetyllysine occurs at positions 328 and 341. Residues 329–342 (WKSKGRRFKGKGKG) show a composition bias toward basic residues. The segment at 329–404 (WKSKGRRFKG…QKTENGAGDQ (76 aa)) is disordered. The span at 343–354 (NKAAQAGSAKGK) shows a compositional bias: low complexity. Position 360 is an N6-acetyllysine (K360). T362 bears the Phosphothreonine mark. S366 carries the phosphoserine modification. Residues 381–391 (RAREETDKEPP) are compositionally biased toward basic and acidic residues.

Interacts with DDX15. May interact with RUFY1. In terms of processing, phosphorylated in the C-terminal part of the protein.

It is found in the nucleus. In terms of biological role, binds to the 3' poly(U) terminus of nascent RNA polymerase III transcripts, protecting them from exonuclease digestion and facilitating their folding and maturation. This is Lupus La protein homolog (SSB) from Bos taurus (Bovine).